The chain runs to 84 residues: Small ribosomal subunit protein uS17 (84 aa).

The protein belongs to the universal ribosomal protein uS17 family. Part of the 30S ribosomal subunit.

In terms of biological role, one of the primary rRNA binding proteins, it binds specifically to the 5'-end of 16S ribosomal RNA. In Clostridium botulinum (strain Eklund 17B / Type B), this protein is Small ribosomal subunit protein uS17.